The sequence spans 552 residues: Cytochrome P450 97B1, chloroplastic (552 aa).

The transit peptide at 1-52 (MVAAPISTVKLTDANLHTRFHSSSSSTPSTLSLPLSLHFHFSSHSKRFSSIR) directs the protein to the chloroplast. A heme-binding site is contributed by Cys528.

The protein belongs to the cytochrome P450 family. It depends on heme as a cofactor.

The protein localises to the plastid. It is found in the chloroplast membrane. The polypeptide is Cytochrome P450 97B1, chloroplastic (CYP97B1) (Pisum sativum (Garden pea)).